The sequence spans 1074 residues: Fibrous sheath CABYR-binding protein (1074 aa).

A disordered region spans residues 1 to 73; it reads MEECEEPEEP…SKDNYSRKEY (73 aa). Phosphoserine occurs at positions 25, 57, 186, and 275. Disordered regions lie at residues 272-294 and 317-343; these read QAPSPAEETSAAETATTTAKDVV and LVQGALSDKPSDQQYPQGTEMAPSELP. Residues 274–290 show a composition bias toward low complexity; the sequence is PSPAEETSAAETATTTA. Residue Ser-365 is modified to Phosphoserine. Disordered stretches follow at residues 437–789 and 818–982; these read VSAD…PLES and GVPA…PLKT. The span at 448 to 467 shows a compositional bias: low complexity; sequence PPSAEDASEEVASSEVLPPS. Positions 528–544 are enriched in pro residues; it reads VLPPPAEEAPAEVPPPL. The span at 558–575 shows a compositional bias: low complexity; the sequence is EEGPAEVPLAPAEEVPAE. Composition is skewed to pro residues over residues 576–592 and 673–688; these read FLPPPAEEVPAEVPPPL and PLPPTAERPEEAPPPA. Low complexity predominate over residues 689–720; sequence TEEAPVEVLPPATEEAPVEVLPPATEEAPVEV. Residue Ser-1020 is modified to Phosphoserine. Residues 1026–1054 are disordered; that stretch reads SEKELESTTLTSDKMSEGIDSVPEDVSGT.

As to quaternary structure, interacts with CABYR. Interacts with ROPN1 and ROPN1L; the interaction increases upon spermatozoa capacitation conditions. In terms of processing, phosphorylated by PKA upon spermatozoa capacitation conditions. In terms of tissue distribution, expression is restricted to testis and epididymis, expressed by spermatozoa.

It is found in the cell projection. It localises to the cilium. Its subcellular location is the flagellum. Functionally, may be involved in the later stages of fibrous sheath biogenesis and spermatozoa capacitation. Inhibits ROPN1 and ROPN1L SUMOylation. Binds calcium. This chain is Fibrous sheath CABYR-binding protein, found in Mus musculus (Mouse).